Reading from the N-terminus, the 589-residue chain is Probable translation initiation factor IF-2 (589 aa).

The tr-type G domain occupies 4-225; sequence VRSPFVVVMG…AGVSQRFIPR (222 aa). Residues 13–20 form a G1 region; the sequence is GHVDVGKT. 13–20 provides a ligand contact to GTP; the sequence is GHVDVGKT. The interval 38–42 is G2; it reads MITQH. Residues 79 to 82 are G3; it reads DTPG. GTP-binding positions include 79 to 83 and 133 to 136; these read DTPGH and NKLD. Residues 133-136 form a G4 region; it reads NKLD. The G5 stretch occupies residues 201–203; the sequence is SAV.

This sequence belongs to the TRAFAC class translation factor GTPase superfamily. Classic translation factor GTPase family. IF-2 subfamily.

Function in general translation initiation by promoting the binding of the formylmethionine-tRNA to ribosomes. Seems to function along with eIF-2. In Pyrobaculum aerophilum (strain ATCC 51768 / DSM 7523 / JCM 9630 / CIP 104966 / NBRC 100827 / IM2), this protein is Probable translation initiation factor IF-2.